The chain runs to 293 residues: Probable endonuclease 4 (293 aa).

His-77, His-118, Glu-153, Asp-187, His-190, His-221, Asp-234, His-236, and Glu-266 together coordinate Zn(2+).

The protein belongs to the AP endonuclease 2 family. Zn(2+) is required as a cofactor.

The catalysed reaction is Endonucleolytic cleavage to 5'-phosphooligonucleotide end-products.. Functionally, endonuclease IV plays a role in DNA repair. It cleaves phosphodiester bonds at apurinic or apyrimidinic (AP) sites, generating a 3'-hydroxyl group and a 5'-terminal sugar phosphate. The chain is Probable endonuclease 4 from Mesoplasma florum (strain ATCC 33453 / NBRC 100688 / NCTC 11704 / L1) (Acholeplasma florum).